Consider the following 211-residue polypeptide: Ribonuclease HII (211 aa).

Residues 11–200 form the RNase H type-2 domain; sequence EFIAGVDEVG…VKKLLSTLLS (190 aa). Asp17, Glu18, and Asp109 together coordinate a divalent metal cation.

It belongs to the RNase HII family. Requires Mn(2+) as cofactor. Mg(2+) is required as a cofactor.

It localises to the cytoplasm. The enzyme catalyses Endonucleolytic cleavage to 5'-phosphomonoester.. In terms of biological role, endonuclease that specifically degrades the RNA of RNA-DNA hybrids. This is Ribonuclease HII from Histophilus somni (strain 2336) (Haemophilus somnus).